We begin with the raw amino-acid sequence, 441 residues long: Divalent metal cation transporter MntH (441 aa).

The next 11 helical transmembrane spans lie at 41-61, 74-94, 116-136, 141-161, 183-203, 223-243, 271-291, 311-331, 360-380, 381-401, and 419-439; these read TGIA…IGYM, AAYG…AMLF, HFPA…AMAT, FLGG…AGMI, AAIA…LMIA, AALT…TLYL, VVVA…MAAS, IPVL…TSGV, AVTI…TRAM, VASQ…LLIL, and IVAG…VWAA.

This sequence belongs to the NRAMP family.

The protein resides in the cell inner membrane. H(+)-stimulated, divalent metal cation uptake system. In Burkholderia ambifaria (strain ATCC BAA-244 / DSM 16087 / CCUG 44356 / LMG 19182 / AMMD) (Burkholderia cepacia (strain AMMD)), this protein is Divalent metal cation transporter MntH.